A 223-amino-acid polypeptide reads, in one-letter code: Type 3 secretion system stator protein (223 aa).

Belongs to the SctL stator family. The core secretion machinery of the T3SS is composed of approximately 20 different proteins, including cytoplasmic components, a base, an export apparatus and a needle. This subunit is part of the cytosolic complex. Interacts directly with YscN/SctN (T3SS ATPase) and YscQ/SctQ (the major sorting platform component). Forms homodimers.

Its subcellular location is the cytoplasm. In terms of biological role, component of the type III secretion system (T3SS), also called injectisome, which is used to inject bacterial effector proteins into eukaryotic host cells. Acts as a regulator of the YscN/SctN ATPase activity. Overexpression of YscL/SctL abolishes type III secretion and down-regulates the expression of secretion apparatus components. The sequence is that of Type 3 secretion system stator protein from Yersinia enterocolitica.